The sequence spans 396 residues: Pinosylvin synthase 2 (396 aa).

60–63 is a binding site for substrate; that stretch reads KFKR. The active site involves cysteine 170. Substrate-binding positions include leucine 273 and 311-313; that span reads GGR.

This sequence belongs to the thiolase-like superfamily. Chalcone/stilbene synthases family. Homodimer.

It is found in the cytoplasm. The enzyme catalyses (E)-cinnamoyl-CoA + 3 malonyl-CoA + 3 H(+) = (E)-pinosylvin + 4 CO2 + 4 CoA. It carries out the reaction 3-phenylpropanoyl-CoA + 3 malonyl-CoA + 3 H(+) = dihydropinosylvin + 4 CO2 + 4 CoA. The protein operates within phytoalexin biosynthesis; pinosylvin biosynthesis. Its function is as follows. Catalyzes the production of pinosylvin from cinnamoyl-CoA and malonyl-CoA, and dihydropinosylvin from dihydrocinnamoyl-CoA. This Pinus strobus (Eastern white pine) protein is Pinosylvin synthase 2.